A 122-amino-acid chain; its full sequence is Ribonuclease P protein component (122 aa).

It belongs to the RnpA family. Consists of a catalytic RNA component (M1 or rnpB) and a protein subunit.

The enzyme catalyses Endonucleolytic cleavage of RNA, removing 5'-extranucleotides from tRNA precursor.. RNaseP catalyzes the removal of the 5'-leader sequence from pre-tRNA to produce the mature 5'-terminus. It can also cleave other RNA substrates such as 4.5S RNA. The protein component plays an auxiliary but essential role in vivo by binding to the 5'-leader sequence and broadening the substrate specificity of the ribozyme. The polypeptide is Ribonuclease P protein component (Roseiflexus castenholzii (strain DSM 13941 / HLO8)).